The primary structure comprises 401 residues: uncharacterized protein (401 aa).

It belongs to the serpin family.

Functionally, may act as an inhibitor for a host chymotrypsin-like protease. This is an uncharacterized protein from Acanthamoeba polyphaga mimivirus (APMV).